A 406-amino-acid chain; its full sequence is Bifunctional enzyme IspD/IspF (406 aa).

Positions 1-246 (MTQMHSTQPM…KLSAGLLPDV (246 aa)) are 2-C-methyl-D-erythritol 4-phosphate cytidylyltransferase. Positions 247–406 (RTGNGYDVHQ…ATVVYRGGRP (160 aa)) are 2-C-methyl-D-erythritol 2,4-cyclodiphosphate synthase. 2 residues coordinate a divalent metal cation: aspartate 253 and histidine 255. 4-CDP-2-C-methyl-D-erythritol 2-phosphate is bound by residues 253-255 (DVH) and 279-280 (HS). Histidine 287 is a binding site for a divalent metal cation. Residues 301–303 (DIG), 377–380 (TTNE), phenylalanine 384, and arginine 387 contribute to the 4-CDP-2-C-methyl-D-erythritol 2-phosphate site.

The protein in the N-terminal section; belongs to the IspD/TarI cytidylyltransferase family. IspD subfamily. It in the C-terminal section; belongs to the IspF family. A divalent metal cation is required as a cofactor.

The catalysed reaction is 2-C-methyl-D-erythritol 4-phosphate + CTP + H(+) = 4-CDP-2-C-methyl-D-erythritol + diphosphate. It carries out the reaction 4-CDP-2-C-methyl-D-erythritol 2-phosphate = 2-C-methyl-D-erythritol 2,4-cyclic diphosphate + CMP. It functions in the pathway isoprenoid biosynthesis; isopentenyl diphosphate biosynthesis via DXP pathway; isopentenyl diphosphate from 1-deoxy-D-xylulose 5-phosphate: step 2/6. The protein operates within isoprenoid biosynthesis; isopentenyl diphosphate biosynthesis via DXP pathway; isopentenyl diphosphate from 1-deoxy-D-xylulose 5-phosphate: step 4/6. Functionally, bifunctional enzyme that catalyzes the formation of 4-diphosphocytidyl-2-C-methyl-D-erythritol from CTP and 2-C-methyl-D-erythritol 4-phosphate (MEP) (IspD), and catalyzes the conversion of 4-diphosphocytidyl-2-C-methyl-D-erythritol 2-phosphate (CDP-ME2P) to 2-C-methyl-D-erythritol 2,4-cyclodiphosphate (ME-CPP) with a corresponding release of cytidine 5-monophosphate (CMP) (IspF). The polypeptide is Bifunctional enzyme IspD/IspF (Rhizobium rhizogenes (strain K84 / ATCC BAA-868) (Agrobacterium radiobacter)).